A 453-amino-acid chain; its full sequence is Bifunctional protein GlmU (453 aa).

The segment at 1 to 226 (MTLDVVILAA…ALEVEGVNNR (226 aa)) is pyrophosphorylase. UDP-N-acetyl-alpha-D-glucosamine is bound by residues 8–11 (LAAG), lysine 22, glutamine 73, 78–79 (GT), 99–101 (YGD), glycine 136, glutamate 151, asparagine 166, and asparagine 224. A Mg(2+)-binding site is contributed by aspartate 101. Asparagine 224 contacts Mg(2+). Residues 227–247 (SQMAALERAYQRDRAERLLTE) form a linker region. Residues 248–453 (GVALADPARF…AGWKRPRKSS (206 aa)) are N-acetyltransferase. UDP-N-acetyl-alpha-D-glucosamine contacts are provided by arginine 330 and lysine 348. Histidine 360 serves as the catalytic Proton acceptor. 2 residues coordinate UDP-N-acetyl-alpha-D-glucosamine: tyrosine 363 and asparagine 374. Residues alanine 377, 383–384 (NY), serine 402, alanine 420, and arginine 437 contribute to the acetyl-CoA site.

In the N-terminal section; belongs to the N-acetylglucosamine-1-phosphate uridyltransferase family. This sequence in the C-terminal section; belongs to the transferase hexapeptide repeat family. In terms of assembly, homotrimer. Mg(2+) serves as cofactor.

The protein localises to the cytoplasm. It catalyses the reaction alpha-D-glucosamine 1-phosphate + acetyl-CoA = N-acetyl-alpha-D-glucosamine 1-phosphate + CoA + H(+). The catalysed reaction is N-acetyl-alpha-D-glucosamine 1-phosphate + UTP + H(+) = UDP-N-acetyl-alpha-D-glucosamine + diphosphate. The protein operates within nucleotide-sugar biosynthesis; UDP-N-acetyl-alpha-D-glucosamine biosynthesis; N-acetyl-alpha-D-glucosamine 1-phosphate from alpha-D-glucosamine 6-phosphate (route II): step 2/2. It participates in nucleotide-sugar biosynthesis; UDP-N-acetyl-alpha-D-glucosamine biosynthesis; UDP-N-acetyl-alpha-D-glucosamine from N-acetyl-alpha-D-glucosamine 1-phosphate: step 1/1. Its pathway is bacterial outer membrane biogenesis; LPS lipid A biosynthesis. Its function is as follows. Catalyzes the last two sequential reactions in the de novo biosynthetic pathway for UDP-N-acetylglucosamine (UDP-GlcNAc). The C-terminal domain catalyzes the transfer of acetyl group from acetyl coenzyme A to glucosamine-1-phosphate (GlcN-1-P) to produce N-acetylglucosamine-1-phosphate (GlcNAc-1-P), which is converted into UDP-GlcNAc by the transfer of uridine 5-monophosphate (from uridine 5-triphosphate), a reaction catalyzed by the N-terminal domain. The polypeptide is Bifunctional protein GlmU (Chromohalobacter salexigens (strain ATCC BAA-138 / DSM 3043 / CIP 106854 / NCIMB 13768 / 1H11)).